A 184-amino-acid chain; its full sequence is NEDD8-conjugating enzyme UBC12 (184 aa).

Residues 10–29 (EKQRQAAQAQAPAQGRSAAS) are disordered. The span at 14 to 29 (QAAQAQAPAQGRSAAS) shows a compositional bias: low complexity. In terms of domain architecture, UBC core spans 30–174 (PAQLRVEKDL…VQATMMGGHL (145 aa)). The active-site Glycyl thioester intermediate is the Cys112.

This sequence belongs to the ubiquitin-conjugating enzyme family. UBC12 subfamily.

The enzyme catalyses [E1 NEDD8-activating enzyme]-S-[NEDD8 protein]-yl-L-cysteine + [E2 NEDD8-conjugating enzyme]-L-cysteine = [E1 NEDD8-activating enzyme]-L-cysteine + [E2 NEDD8-conjugating enzyme]-S-[NEDD8-protein]-yl-L-cysteine.. It participates in protein modification; protein neddylation. In terms of biological role, accepts the ubiquitin-like protein NEDD8/RUB1 from the UBA3-ULA1 E1 complex and catalyzes its covalent attachment to other proteins. The sequence is that of NEDD8-conjugating enzyme UBC12 (UBC12) from Eremothecium gossypii (strain ATCC 10895 / CBS 109.51 / FGSC 9923 / NRRL Y-1056) (Yeast).